A 662-amino-acid polypeptide reads, in one-letter code: PAN2-PAN3 deadenylation complex subunit PAN3 (662 aa).

Disordered regions lie at residues 1–26 (MASA…AREN) and 59–131 (TTYQ…RAET). The C3H1-type zinc-finger motif lies at 26–55 (NAKDTLCRNVTIYGRCRYEDKGCAFNHDPH). Residues 72-85 (DSPSFTPSLLSSNG) show a composition bias toward polar residues. Residues 86–102 (SSPTTASVTAKKAATIS) are compositionally biased toward low complexity. The span at 114–126 (RNITSRSNTSTPS) shows a compositional bias: polar residues. Positions 265-525 (QTLPNTQLPA…NIDIFITGIS (261 aa)) are pseudokinase domain. ATP contacts are provided by residues R317, 366-373 (DYHPLSKT), and 425-426 (SK). Positions 526–564 (SQLMSTFDSALHLDDELTSDLSRELENGRLVRLVTKLNF) form a coiled coil. The interval 565–662 (VNERPEYEHD…ALLKPTRRLH (98 aa)) is knob domain.

The protein belongs to the protein kinase superfamily. PAN3 family. As to quaternary structure, homodimer. Forms a heterotrimer with a catalytic subunit pan2 to form the poly(A)-nuclease (PAN) deadenylation complex. Interacts (via PAM-2 motif) with poly(A)-binding protein pab1 (via PABC domain), conferring substrate specificity of the enzyme complex.

It is found in the cytoplasm. In terms of biological role, regulatory subunit of the poly(A)-nuclease (PAN) deadenylation complex, one of two cytoplasmic mRNA deadenylases involved in mRNA turnover. PAN specifically shortens poly(A) tails of RNA and the activity is stimulated by poly(A)-binding protein pab1. PAN deadenylation is followed by rapid degradation of the shortened mRNA tails by the CCR4-NOT complex. Deadenylated mRNAs are then degraded by two alternative mechanisms, namely exosome-mediated 3'-5' exonucleolytic degradation, or deadenylation-dependent mRNA decaping and subsequent 5'-3' exonucleolytic degradation by xrn1. May also be involved in post-transcriptional maturation of mRNA poly(A) tails. pan3 acts as a positive regulator for PAN activity, recruiting the catalytic subunit pan2 to mRNA via its interaction with RNA and with pab1. This is PAN2-PAN3 deadenylation complex subunit PAN3 from Aspergillus oryzae (strain ATCC 42149 / RIB 40) (Yellow koji mold).